A 131-amino-acid chain; its full sequence is Probable calcium-binding protein CML34 (131 aa).

EF-hand domains lie at 1–33 (MSAKRVFEKFDKNKDGKLSLDEFREVALAFSPY), 34–69 (FTQEDIVKFFEEIDVDGNGELNADEFTSCIEKMLKE), 70–97 (VFVFCDVDGDGKIPASESYVTMTSLGKK), and 98–131 (FTEETSAEKVRAADVDGDGYLNFDEFMALVIGDI). Residues Asp-11, Asn-13, Asp-15, Lys-17, Glu-22, Asp-47, Asp-49, Asn-51, Glu-53, and Glu-58 each contribute to the Ca(2+) site. Residues Asp-111, Asp-113, Asp-115, Tyr-117, and Glu-122 each coordinate Ca(2+).

Functionally, potential calcium sensor. The sequence is that of Probable calcium-binding protein CML34 (CML34) from Arabidopsis thaliana (Mouse-ear cress).